A 385-amino-acid chain; its full sequence is Putative glutamate--cysteine ligase 2 (385 aa).

The protein belongs to the glutamate--cysteine ligase type 2 family. YbdK subfamily.

The catalysed reaction is L-cysteine + L-glutamate + ATP = gamma-L-glutamyl-L-cysteine + ADP + phosphate + H(+). Its function is as follows. ATP-dependent carboxylate-amine ligase which exhibits weak glutamate--cysteine ligase activity. The polypeptide is Putative glutamate--cysteine ligase 2 (Herpetosiphon aurantiacus (strain ATCC 23779 / DSM 785 / 114-95)).